We begin with the raw amino-acid sequence, 206 residues long: High frequency lysogenization protein HflD homolog (206 aa).

This sequence belongs to the HflD family.

It localises to the cytoplasm. It is found in the cell inner membrane. This chain is High frequency lysogenization protein HflD homolog, found in Pseudomonas syringae pv. tomato (strain ATCC BAA-871 / DC3000).